The primary structure comprises 336 residues: Probable deoxyhypusine synthase (336 aa).

Residue Lys-308 is the Nucleophile of the active site.

Belongs to the deoxyhypusine synthase family. It depends on NAD(+) as a cofactor.

The enzyme catalyses [eIF5A protein]-L-lysine + spermidine = [eIF5A protein]-deoxyhypusine + propane-1,3-diamine. Its pathway is protein modification; eIF5A hypusination. Its function is as follows. Catalyzes the NAD-dependent oxidative cleavage of spermidine and the subsequent transfer of the butylamine moiety of spermidine to the epsilon-amino group of a specific lysine residue of the eIF-5A precursor protein to form the intermediate deoxyhypusine residue. This Thermococcus gammatolerans (strain DSM 15229 / JCM 11827 / EJ3) protein is Probable deoxyhypusine synthase.